The following is a 753-amino-acid chain: Elongin-A2 (753 aa).

The TFIIS N-terminal domain occupies 5–80; that stretch reads STTLHAVEKL…ARWKKLVLVD (76 aa). Disordered stretches follow at residues 80-245, 261-453, and 477-497; these read DRNT…DWHS, ETPR…GPKT, and LSDSDSMTSQAKPEALSSPKF. Basic and acidic residues-rich tracts occupy residues 147-157 and 271-285; these read HSREPRAERKC and ARDRQPSDFKTDKEG. Positions 306–317 are enriched in basic residues; the sequence is KRPQHSHSNKKR. Residues 333–348 are compositionally biased toward basic and acidic residues; that stretch reads SPEEKEQLSNDRETQE. The segment covering 366 to 377 has biased composition (acidic residues); the sequence is EVEEVDMAEEFE. Residues 409–428 are compositionally biased toward basic and acidic residues; sequence DKQRKANESKGTRESWDSAK. Positions 500 to 659 are activation domain; the sequence is EAAFPGRRVN…TPYDTSRRQE (160 aa). The BC-box stretch occupies residues 528-537; it reads TLRQQCAQVL. Residues 528 to 537 form an interacting with Elongin BC complex region; that stretch reads TLRQQCAQVL. The tract at residues 650–735 is disordered; it reads TPYDTSRRQE…KTRKQAAKKV (86 aa). Residues 654–663 are compositionally biased toward basic and acidic residues; that stretch reads TSRRQEKSAG. Over residues 680-700 the composition is skewed to low complexity; sequence GSSHTPSSQSSSGGGRDSSSS.

As to quaternary structure, heterotrimer of an A (ELOA, ELOA2 or ELOA3P), ELOB and ELOC subunit. In terms of tissue distribution, specifically expressed in testis.

It is found in the nucleus. Functionally, SIII, also known as elongin, is a general transcription elongation factor that increases the RNA polymerase II transcription elongation past template-encoded arresting sites. Subunit A2 is transcriptionally active but its transcription activity is not enhanced by binding to the dimeric complex of the SIII regulatory subunits B and C (elongin BC complex). The protein is Elongin-A2 of Homo sapiens (Human).